Reading from the N-terminus, the 462-residue chain is Cytochrome P450 20A1 (462 aa).

The chain crosses the membrane as a helical span at residues 4-24 (FAIFAVTFLLALVGAVLYLYP). Cys409 is a binding site for heme.

This sequence belongs to the cytochrome P450 family. Requires heme as cofactor.

The protein resides in the membrane. This is Cytochrome P450 20A1 (CYP20A1) from Bos taurus (Bovine).